We begin with the raw amino-acid sequence, 355 residues long: Ribosomal RNA large subunit methyltransferase M (355 aa).

S-adenosyl-L-methionine contacts are provided by residues S183, 216–219 (SPGG), D235, D255, and D271. Residue K300 is the Proton acceptor of the active site.

The protein belongs to the class I-like SAM-binding methyltransferase superfamily. RNA methyltransferase RlmE family. RlmM subfamily. In terms of assembly, monomer.

Its subcellular location is the cytoplasm. It catalyses the reaction cytidine(2498) in 23S rRNA + S-adenosyl-L-methionine = 2'-O-methylcytidine(2498) in 23S rRNA + S-adenosyl-L-homocysteine + H(+). Its function is as follows. Catalyzes the 2'-O-methylation at nucleotide C2498 in 23S rRNA. The sequence is that of Ribosomal RNA large subunit methyltransferase M from Pseudomonas putida (strain W619).